The primary structure comprises 342 residues: N-acetyl-gamma-glutamyl-phosphate reductase (342 aa).

C147 is a catalytic residue.

The protein belongs to the NAGSA dehydrogenase family. Type 1 subfamily.

The protein localises to the cytoplasm. The catalysed reaction is N-acetyl-L-glutamate 5-semialdehyde + phosphate + NADP(+) = N-acetyl-L-glutamyl 5-phosphate + NADPH + H(+). Its pathway is amino-acid biosynthesis; L-arginine biosynthesis; N(2)-acetyl-L-ornithine from L-glutamate: step 3/4. In terms of biological role, catalyzes the NADPH-dependent reduction of N-acetyl-5-glutamyl phosphate to yield N-acetyl-L-glutamate 5-semialdehyde. This chain is N-acetyl-gamma-glutamyl-phosphate reductase, found in Campylobacter jejuni (strain RM1221).